Reading from the N-terminus, the 421-residue chain is Expansin-like protein DDB_G0293186 (421 aa).

An N-terminal signal peptide occupies residues Met-1 to Ser-20. Residue Asn-19 is glycosylated (N-linked (GlcNAc...) asparagine). Residues Gly-43–Tyr-139 form the Expansin-like EG45 domain. 2 disulfides stabilise this stretch: Cys-46/Cys-70 and Cys-73/Cys-134. Residues Asn-117 and Asn-391 are each glycosylated (N-linked (GlcNAc...) asparagine).

It belongs to the expansin family. Expansin A subfamily.

It is found in the secreted. Functionally, may serve to lubricate the movement of the cellulose microfibrils during cell growth and wall extension and/or may serve to maintain the fluid state of the slug cell wall. The polypeptide is Expansin-like protein DDB_G0293186 (Dictyostelium discoideum (Social amoeba)).